The sequence spans 473 residues: 3-isopropylmalate dehydratase large subunit (473 aa).

[4Fe-4S] cluster is bound by residues cysteine 348, cysteine 408, and cysteine 411.

The protein belongs to the aconitase/IPM isomerase family. LeuC type 1 subfamily. As to quaternary structure, heterodimer of LeuC and LeuD. [4Fe-4S] cluster serves as cofactor.

It carries out the reaction (2R,3S)-3-isopropylmalate = (2S)-2-isopropylmalate. Its pathway is amino-acid biosynthesis; L-leucine biosynthesis; L-leucine from 3-methyl-2-oxobutanoate: step 2/4. Catalyzes the isomerization between 2-isopropylmalate and 3-isopropylmalate, via the formation of 2-isopropylmaleate. The chain is 3-isopropylmalate dehydratase large subunit from Haloarcula marismortui (strain ATCC 43049 / DSM 3752 / JCM 8966 / VKM B-1809) (Halobacterium marismortui).